We begin with the raw amino-acid sequence, 184 residues long: Ribosome-recycling factor (184 aa).

The segment at 141 to 165 (DEKNGDITEDDLRSQTDDVQKATDN) is disordered.

It belongs to the RRF family.

The protein resides in the cytoplasm. In terms of biological role, responsible for the release of ribosomes from messenger RNA at the termination of protein biosynthesis. May increase the efficiency of translation by recycling ribosomes from one round of translation to another. The chain is Ribosome-recycling factor from Staphylococcus epidermidis (strain ATCC 35984 / DSM 28319 / BCRC 17069 / CCUG 31568 / BM 3577 / RP62A).